The following is a 620-amino-acid chain: Threonine--tRNA ligase (620 aa).

The segment at 1-141 (MKMLLIHSDY…LSRKIVAKEE (141 aa)) is editing domain. A catalytic region spans residues 197–496 (PHVKFIKEKD…AEKGNAPMLP (300 aa)). Residues C289, H341, and H465 each contribute to the Zn(2+) site.

It belongs to the class-II aminoacyl-tRNA synthetase family. As to quaternary structure, homodimer. Zn(2+) is required as a cofactor.

The protein localises to the cytoplasm. The catalysed reaction is tRNA(Thr) + L-threonine + ATP = L-threonyl-tRNA(Thr) + AMP + diphosphate + H(+). Its activity is regulated as follows. Not inhibited by 1 uM borrelidin (BN); probably does not bind BN. Its function is as follows. Catalyzes the attachment of threonine to tRNA(Thr) in a two-step reaction: L-threonine is first activated by ATP to form Thr-AMP and then transferred to the acceptor end of tRNA(Thr). Also activates L-serine, but does not detectably transfer it to tRNA(Thr). Edits incorrectly charged L-seryl-tRNA(Thr) via its editing domain. Has no activity on correctly acylated L-seryl-tRNA(Ser) or L-threonyl-tRNA(Thr). Deacylates correctly charged glycyl-tRNA(Gly), but not glycyl-tRNA(Gly)(2'-dA76) (the terminal 2'-OH of tRNA adenine 76 has been dehydroxylated) nor the 2'-fluoro tRNA derivative, strongly suggesting the editing function is tRNA catalyzed. This chain is Threonine--tRNA ligase, found in Methanocaldococcus jannaschii (strain ATCC 43067 / DSM 2661 / JAL-1 / JCM 10045 / NBRC 100440) (Methanococcus jannaschii).